Here is a 369-residue protein sequence, read N- to C-terminus: 4-hydroxy-3-methylbut-2-en-1-yl diphosphate synthase (flavodoxin) (369 aa).

[4Fe-4S] cluster is bound by residues Cys270, Cys273, Cys305, and Glu312.

Belongs to the IspG family. [4Fe-4S] cluster is required as a cofactor.

It catalyses the reaction (2E)-4-hydroxy-3-methylbut-2-enyl diphosphate + oxidized [flavodoxin] + H2O + 2 H(+) = 2-C-methyl-D-erythritol 2,4-cyclic diphosphate + reduced [flavodoxin]. It functions in the pathway isoprenoid biosynthesis; isopentenyl diphosphate biosynthesis via DXP pathway; isopentenyl diphosphate from 1-deoxy-D-xylulose 5-phosphate: step 5/6. Its function is as follows. Converts 2C-methyl-D-erythritol 2,4-cyclodiphosphate (ME-2,4cPP) into 1-hydroxy-2-methyl-2-(E)-butenyl 4-diphosphate. The sequence is that of 4-hydroxy-3-methylbut-2-en-1-yl diphosphate synthase (flavodoxin) from Haemophilus ducreyi (strain 35000HP / ATCC 700724).